Consider the following 331-residue polypeptide: Laforin (331 aa).

Residues 1-124 (MRFRFGVVVP…NNLVDGVYCL (124 aa)) form the CBM20 domain. Phosphoserine; by AMPK is present on S25. Substrate-binding positions include W32, K87, 103–107 (GPHHD), D197, D235, and R241. The 168-residue stretch at 156–323 (HYSRILPNIW…QEDFFQKFGK (168 aa)) folds into the Tyrosine-protein phosphatase domain. The active-site Phosphocysteine intermediate is C266. Residues 266–272 (CNAGVGR) carry the Glucan phosphatase signature motif CXAGXGR motif. Substrate contacts are provided by residues 267–272 (NAGVGR) and Y304.

Belongs to the protein-tyrosine phosphatase family. As to quaternary structure, homodimer. Interacts with itself. Interacts with PPP1R3B, PPP1R3C, PPP1R3D, HIRIP5, and EPM2AIP1. Binds glycogen and Lafora bodies. Interacts with NHLRC1/malin (via the NHL repeats). Forms a complex with NHLRC1/malin and HSP70. Interacts with PPP1R3D; in the presence of NHLC1/malin the interaction leads to ubiquitination and autophagic degradation of PPP1R3D. Interacts (via the phosphatase domain) with MAPT/Tau; the interaction dephosphorylates MAPT. Isoform 1 and isoform 2 interact to form a heterodimeric complex that lacks phosphatase activity (in vitro). Active phosphatase isoform 7 and isoform 1 interact with each other, but give rise to lower phosphatase activity than isoform 1 or isoform 7 by themselves (in vitro). Active phosphatase isoform 7 and inactive isoform 2 interact with each other, but give rise to lower phosphatase activity than isoform 7 by itself (in vitro). Interacts with PRDM8. In terms of processing, polyubiquitinated by NHLRC1/malin. Post-translationally, phosphorylation on Ser-25 by AMPK affects the phosphatase activity of the enzyme and its ability to homodimerize and interact with NHLRC1, PPP1R3C or PRKAA2. In terms of tissue distribution, expressed in heart, skeletal muscle, kidney, pancreas and brain. Isoform 4 is also expressed in the placenta.

Its subcellular location is the cytoplasm. It localises to the endoplasmic reticulum membrane. The protein localises to the cell membrane. It is found in the nucleus. It carries out the reaction O-phospho-L-tyrosyl-[protein] + H2O = L-tyrosyl-[protein] + phosphate. The enzyme catalyses O-phospho-L-seryl-[protein] + H2O = L-seryl-[protein] + phosphate. It catalyses the reaction O-phospho-L-threonyl-[protein] + H2O = L-threonyl-[protein] + phosphate. Plays an important role in preventing glycogen hyperphosphorylation and the formation of insoluble aggregates, via its activity as glycogen phosphatase, and by promoting the ubiquitination of proteins involved in glycogen metabolism via its interaction with the E3 ubiquitin ligase NHLRC1/malin. Shows strong phosphatase activity towards complex carbohydrates in vitro, avoiding glycogen hyperphosphorylation which is associated with reduced branching and formation of insoluble aggregates. Dephosphorylates phosphotyrosine and synthetic substrates, such as para-nitrophenylphosphate (pNPP), and has low activity with phosphoserine and phosphothreonine substrates (in vitro). Has been shown to dephosphorylate MAPT. Forms a complex with NHLRC1/malin and HSP70, which suppresses the cellular toxicity of misfolded proteins by promoting their degradation through the ubiquitin-proteasome system (UPS). Acts as a scaffold protein to facilitate PPP1R3C/PTG ubiquitination by NHLRC1/malin. Also promotes proteasome-independent protein degradation through the macroautophagy pathway. In terms of biological role, does not bind to glycogen. Lacks phosphatase activity and might function as a dominant-negative regulator for the phosphatase activity of isoform 1 and isoform 7. Functionally, has phosphatase activity (in vitro). The sequence is that of Laforin (EPM2A) from Homo sapiens (Human).